Here is a 428-residue protein sequence, read N- to C-terminus: MQWTKSEQLYEEALRHIVGGVNSPSRSYKAVGGGAPVVMERAQGAYFWDVDGNKYIDYLAAYGPIITGHAHPHITAAIQRAAETGVLYGTPTPHEITFAKMLKEAIPSLEKVRFVNSGTEAVMTTIRVARAYTGRSKIVKFAGCYHGHSDLVLVAAGSGPSTLGTPDSAGVPQSIAHEVITVPYNDVESFREAMNVWGEHVAAVLVEPIVGNFGIVLPKPGFLEAVNDIAHEAGALVIYDEVITAFRFMYGGAQNLLGIEPDMTAMGKIIGGGLPIGAYGGRQDIMEQVAPLGPAYQAGTMAGNPASMLAGIACLEVLKQEGVYEHLDRLGAMLEEGIMTHARQCGLPVTINRLKGALTVFFTEEKVENYEQAQRSDGELFAKFFKLMLKQGVNLAPSKYEAWFITLAHTEDDIAYTIDAVGRAFRQL.

At Lys268 the chain carries N6-(pyridoxal phosphate)lysine.

Belongs to the class-III pyridoxal-phosphate-dependent aminotransferase family. HemL subfamily. Homodimer. It depends on pyridoxal 5'-phosphate as a cofactor.

It is found in the cytoplasm. The catalysed reaction is (S)-4-amino-5-oxopentanoate = 5-aminolevulinate. It participates in porphyrin-containing compound metabolism; protoporphyrin-IX biosynthesis; 5-aminolevulinate from L-glutamyl-tRNA(Glu): step 2/2. In Geobacillus thermodenitrificans (strain NG80-2), this protein is Glutamate-1-semialdehyde 2,1-aminomutase 1.